We begin with the raw amino-acid sequence, 278 residues long: Protein NIF3 homolog (278 aa).

Belongs to the GTP cyclohydrolase I type 2/NIF3 family.

In Schizosaccharomyces pombe (strain 972 / ATCC 24843) (Fission yeast), this protein is Protein NIF3 homolog.